Consider the following 297-residue polypeptide: 3-mercaptopyruvate sulfurtransferase (297 aa).

A2 carries the post-translational modification N-acetylalanine. Positions 25 to 144 (ASQPLKLLDA…WLSQNLPISS (120 aa)) constitute a Rhodanese 1 domain. A Phosphoserine modification is found at S35. N6-acetyllysine; alternate is present on K40. K40 carries the post-translational modification N6-succinyllysine; alternate. The interval 145–160 (GKSPSEPAEFCAQLDP) is hinge. K146 and K164 each carry N6-succinyllysine. The region spanning 174–288 (DARRFQVVDA…WYMRAQPEHV (115 aa)) is the Rhodanese 2 domain. R188 provides a ligand contact to substrate. Residue C248 is the Cysteine persulfide intermediate of the active site.

Monomer (active form). Homodimer; disulfide-linked (inactive form). The N-terminus is blocked. As to expression, expressed in liver, heart, kidney and brain. Localizes to tubular epithelium in the kidney, pericentral hepatocytes in the liver, cardiac cells in the heart and neuroglial cells in the brain. Also expressed in vascular endothelium of the thoracic aorta. Weak expression in lung and thymus.

The protein localises to the cytoplasm. It is found in the mitochondrion. Its subcellular location is the synapse. It localises to the synaptosome. The enzyme catalyses 2-oxo-3-sulfanylpropanoate + [thioredoxin]-dithiol = [thioredoxin]-disulfide + hydrogen sulfide + pyruvate + H(+). By oxidative stress, and thioredoxin. Under oxidative stress conditions, the catalytic cysteine site is converted to a sulfenate which inhibits the MPST enzyme activity. Reduced thioredoxin cleaves an intersubunit disulfide bond to turn on the redox switch and reactivate the enzyme. Inhibited by different oxidants, hydrogen peroxide and tetrathionate. In terms of biological role, transfer of a sulfur ion to cyanide or to other thiol compounds. Also has weak rhodanese activity. Detoxifies cyanide and is required for thiosulfate biosynthesis. Acts as an antioxidant. In combination with cysteine aminotransferase (CAT), contributes to the catabolism of cysteine and is an important producer of hydrogen sulfide in the brain, retina and vascular endothelial cells. Hydrogen sulfide H(2)S is an important synaptic modulator, signaling molecule, smooth muscle contractor and neuroprotectant. Its production by the 3MST/CAT pathway is regulated by calcium ions. This is 3-mercaptopyruvate sulfurtransferase (Mpst) from Rattus norvegicus (Rat).